The sequence spans 241 residues: Ubiquinone biosynthesis O-methyltransferase (241 aa).

S-adenosyl-L-methionine is bound by residues Arg-46, Gly-66, Asp-87, and Met-131.

It belongs to the methyltransferase superfamily. UbiG/COQ3 family.

It catalyses the reaction a 3-demethylubiquinol + S-adenosyl-L-methionine = a ubiquinol + S-adenosyl-L-homocysteine + H(+). The catalysed reaction is a 3-(all-trans-polyprenyl)benzene-1,2-diol + S-adenosyl-L-methionine = a 2-methoxy-6-(all-trans-polyprenyl)phenol + S-adenosyl-L-homocysteine + H(+). It functions in the pathway cofactor biosynthesis; ubiquinone biosynthesis. Functionally, O-methyltransferase that catalyzes the 2 O-methylation steps in the ubiquinone biosynthetic pathway. The polypeptide is Ubiquinone biosynthesis O-methyltransferase (Bordetella parapertussis (strain 12822 / ATCC BAA-587 / NCTC 13253)).